Here is a 389-residue protein sequence, read N- to C-terminus: Probable inactive purple acid phosphatase 29 (389 aa).

A signal peptide spans methionine 1–alanine 34. Asparagine 80 carries N-linked (GlcNAc...) asparagine glycosylation. Asparagine 136 provides a ligand contact to substrate. Asparagine 136 contributes to the Zn(2+) binding site. Asparagine 191 and asparagine 267 each carry an N-linked (GlcNAc...) asparagine glycan. Residue histidine 303 participates in Zn(2+) binding. Histidine 303–histidine 305 lines the substrate pocket. Residue histidine 305 coordinates Fe cation. Residue asparagine 380 is glycosylated (N-linked (GlcNAc...) asparagine).

Belongs to the metallophosphoesterase superfamily. Purple acid phosphatase family. As to quaternary structure, homodimer. It depends on Fe cation as a cofactor. Requires Zn(2+) as cofactor. Expressed in roots, stems, leaves, flowers and siliques.

It localises to the secreted. This chain is Probable inactive purple acid phosphatase 29 (PAP29), found in Arabidopsis thaliana (Mouse-ear cress).